We begin with the raw amino-acid sequence, 713 residues long: Ribosomal RNA large subunit methyltransferase K/L (713 aa).

The region spanning Thr-46–Leu-157 is the THUMP domain.

Belongs to the methyltransferase superfamily. RlmKL family.

The protein resides in the cytoplasm. The enzyme catalyses guanosine(2445) in 23S rRNA + S-adenosyl-L-methionine = N(2)-methylguanosine(2445) in 23S rRNA + S-adenosyl-L-homocysteine + H(+). It carries out the reaction guanosine(2069) in 23S rRNA + S-adenosyl-L-methionine = N(2)-methylguanosine(2069) in 23S rRNA + S-adenosyl-L-homocysteine + H(+). In terms of biological role, specifically methylates the guanine in position 2445 (m2G2445) and the guanine in position 2069 (m7G2069) of 23S rRNA. In Syntrophotalea carbinolica (strain DSM 2380 / NBRC 103641 / GraBd1) (Pelobacter carbinolicus), this protein is Ribosomal RNA large subunit methyltransferase K/L.